Here is a 247-residue protein sequence, read N- to C-terminus: ATP synthase subunit a, chloroplastic (247 aa).

The next 5 membrane-spanning stretches (helical) occupy residues Gln-38–Val-58, Val-95–Leu-115, Ile-134–Ala-154, Leu-199–Leu-219, and Gly-220–Gly-240.

It belongs to the ATPase A chain family. In terms of assembly, F-type ATPases have 2 components, CF(1) - the catalytic core - and CF(0) - the membrane proton channel. CF(1) has five subunits: alpha(3), beta(3), gamma(1), delta(1), epsilon(1). CF(0) has four main subunits: a, b, b' and c.

It localises to the plastid. The protein localises to the chloroplast thylakoid membrane. Key component of the proton channel; it plays a direct role in the translocation of protons across the membrane. The chain is ATP synthase subunit a, chloroplastic from Trachelium caeruleum (Blue throatwort).